Consider the following 440-residue polypeptide: Beta-1,3-galactosyl-O-glycosyl-glycoprotein beta-1,6-N-acetylglucosaminyltransferase (440 aa).

The Cytoplasmic portion of the chain corresponds to 1-9; it reads MKMAGWKKK. The chain crosses the membrane as a helical; Signal-anchor for type II membrane protein span at residues 10 to 30; that stretch reads LCPGHHLWALGCYMLLAVVSL. Topologically, residues 31–440 are lumenal; sequence RLSLRFKCDV…RHKAIYGTEL (410 aa). Residues Asn72 and Asn108 are each glycosylated (N-linked (GlcNAc...) asparagine; by host). Disulfide bonds link Cys73–Cys230, Cys164–Cys384, Cys185–Cys212, and Cys393–Cys425.

Belongs to the glycosyltransferase 14 family.

Its subcellular location is the host Golgi apparatus membrane. It carries out the reaction a 3-O-[beta-D-galactosyl-(1-&gt;3)-N-acetyl-alpha-D-galactosaminyl]-L-seryl-[protein] + UDP-N-acetyl-alpha-D-glucosamine = 3-O-{beta-D-galactosyl-(1-&gt;3)-[N-acetyl-beta-D-glucosaminyl-(1-&gt;6)]-N-acetyl-alpha-D-galactosaminyl}-L-seryl-[protein] + UDP + H(+). The catalysed reaction is a 3-O-[beta-D-galactosyl-(1-&gt;3)-N-acetyl-alpha-D-galactosaminyl]-L-threonyl-[protein] + UDP-N-acetyl-alpha-D-glucosamine = a 3-O-{beta-D-galactosyl-(1-&gt;3)-[N-acetyl-beta-D-glucosaminyl-(1-&gt;6)]-N-acetyl-alpha-D-galactosaminyl}-L-threonyl-[protein] + UDP + H(+). The enzyme catalyses a beta-D-Gal-(1-&gt;4)-beta-D-GlcNAc-(1-&gt;3)-beta-D-Gal-(1-&gt;4)-beta-D-GlcNAc derivative + UDP-N-acetyl-alpha-D-glucosamine = a beta-D-Gal-(1-&gt;4)-beta-D-GlcNAc-(1-&gt;3)-[beta-D-GlcNAc-(1-&gt;6)]-beta-D-Gal-(1-&gt;4)-N-acetyl-beta-D-glucosaminyl derivative + UDP + H(+). It catalyses the reaction 3-O-[N-acetyl-beta-D-glucosaminyl-(1-&gt;3)-N-acetyl-alpha-D-galactosaminyl]-L-seryl-[protein] + UDP-N-acetyl-alpha-D-glucosamine = 3-O-[N-acetyl-beta-D-glucosaminyl-(1-&gt;3)-[N-acetyl-beta-D-glucosaminyl-(1-&gt;6)]-N-acetyl-alpha-D-galactosaminyl]-L-seryl-[protein] + UDP + H(+). It carries out the reaction a 3-O-[N-acetyl-beta-D-glucosaminyl-(1-&gt;3)-N-acetyl-alpha-D-galactosaminyl]-L-threonyl-[protein] + UDP-N-acetyl-alpha-D-glucosamine = 3-O-[N-acetyl-beta-D-glucosaminyl-(1-&gt;3)-[N-acetyl-beta-D-glucosaminyl-(1-&gt;6)]-N-acetyl-alpha-D-galactosaminyl]-L-threonyl-[protein] + UDP + H(+). The protein operates within protein modification; protein glycosylation. Its function is as follows. Non-essential glycosyltransferase that can synthesize all known mucin beta 6 N-acetylglucosaminides. Mediates core 2 and core 4 O-glycan branching, 2 important steps in mucin-type biosynthesis. Has also I-branching enzyme activity by converting linear into branched poly-N-acetyllactosaminoglycans. Contributes to the post-translational modifications of structural proteins. The polypeptide is Beta-1,3-galactosyl-O-glycosyl-glycoprotein beta-1,6-N-acetylglucosaminyltransferase (Bo17) (Bovine herpesvirus 4 (strain LVR140) (BoHV-4)).